The chain runs to 345 residues: NADH-ubiquinone oxidoreductase chain 2 (345 aa).

The next 9 helical transmembrane spans lie at 1-21 (MNPI…VLTM), 60-80 (FLIQ…NAHL), 110-130 (PIHF…ALII), 149-169 (IPTP…GLGG), 179-196 (MAFS…IITI), 200-222 (LTLF…MHLT), 240-260 (TANL…LSGF), 274-294 (NLVP…MFYL), and 323-343 (TTML…TPTM).

Belongs to the complex I subunit 2 family.

The protein localises to the mitochondrion inner membrane. The enzyme catalyses a ubiquinone + NADH + 5 H(+)(in) = a ubiquinol + NAD(+) + 4 H(+)(out). Core subunit of the mitochondrial membrane respiratory chain NADH dehydrogenase (Complex I) that is believed to belong to the minimal assembly required for catalysis. Complex I functions in the transfer of electrons from NADH to the respiratory chain. The immediate electron acceptor for the enzyme is believed to be ubiquinone. The chain is NADH-ubiquinone oxidoreductase chain 2 (MT-ND2) from Varanus melinus (Quince monitor lizard).